A 229-amino-acid polypeptide reads, in one-letter code: 2,3-bisphosphoglycerate-dependent phosphoglycerate mutase (229 aa).

Residues 8 to 15, 21 to 22, arginine 60, 87 to 90, lysine 98, 114 to 115, and 183 to 184 contribute to the substrate site; these read RHGESAWN, TG, ERHY, RR, and GN. Histidine 9 (tele-phosphohistidine intermediate) is an active-site residue. The active-site Proton donor/acceptor is glutamate 87.

Belongs to the phosphoglycerate mutase family. BPG-dependent PGAM subfamily. As to quaternary structure, homodimer.

It carries out the reaction (2R)-2-phosphoglycerate = (2R)-3-phosphoglycerate. It functions in the pathway carbohydrate degradation; glycolysis; pyruvate from D-glyceraldehyde 3-phosphate: step 3/5. Its function is as follows. Catalyzes the interconversion of 2-phosphoglycerate and 3-phosphoglycerate. In Polynucleobacter necessarius subsp. necessarius (strain STIR1), this protein is 2,3-bisphosphoglycerate-dependent phosphoglycerate mutase.